The following is a 143-amino-acid chain: Transcriptional regulator MraZ (143 aa).

SpoVT-AbrB domains follow at residues 5–47 (EFLH…PMDE) and 76–119 (AIEC…ANDA).

This sequence belongs to the MraZ family. In terms of assembly, forms oligomers.

The protein localises to the cytoplasm. The protein resides in the nucleoid. In Oceanobacillus iheyensis (strain DSM 14371 / CIP 107618 / JCM 11309 / KCTC 3954 / HTE831), this protein is Transcriptional regulator MraZ.